Reading from the N-terminus, the 400-residue chain is NADH-quinone oxidoreductase subunit D (400 aa).

It belongs to the complex I 49 kDa subunit family. In terms of assembly, NDH-1 is composed of 14 different subunits. Subunits NuoB, C, D, E, F, and G constitute the peripheral sector of the complex.

It is found in the cell inner membrane. It catalyses the reaction a quinone + NADH + 5 H(+)(in) = a quinol + NAD(+) + 4 H(+)(out). NDH-1 shuttles electrons from NADH, via FMN and iron-sulfur (Fe-S) centers, to quinones in the respiratory chain. The immediate electron acceptor for the enzyme in this species is believed to be a menaquinone. Couples the redox reaction to proton translocation (for every two electrons transferred, four hydrogen ions are translocated across the cytoplasmic membrane), and thus conserves the redox energy in a proton gradient. In Chlorobaculum parvum (strain DSM 263 / NCIMB 8327) (Chlorobium vibrioforme subsp. thiosulfatophilum), this protein is NADH-quinone oxidoreductase subunit D.